The sequence spans 580 residues: Tetratricopeptide repeat protein 39C (580 aa).

TPR repeat units follow at residues serine 312–glutamine 345, histidine 350–serine 383, and glycine 482–arginine 515.

Belongs to the TTC39 family.

The chain is Tetratricopeptide repeat protein 39C (Ttc39c) from Mus musculus (Mouse).